The chain runs to 711 residues: Protein Smaug homolog 1 (711 aa).

S168 is modified (phosphoserine). The disordered stretch occupies residues 278–323 (ARGPQCLPSDHAPLSPQSSVASSGSGGSEHLEDQTTARNTFQEEGS). Residues 323–396 (SGMKDVPAWL…LKSLERDIIE (74 aa)) enclose the SAM domain. S420 bears the Phosphoserine mark. Disordered stretches follow at residues 422 to 448 (STTP…SAAA) and 565 to 588 (NRGF…GRRN). At T424 the chain carries Phosphothreonine. R566 is subject to Omega-N-methylarginine. Residues 568 to 581 (FGQSNSLPTASSVG) are compositionally biased toward polar residues. Phosphoserine is present on S573.

Belongs to the SMAUG family. In terms of tissue distribution, expressed in brain (at protein level).

Its subcellular location is the cytoplasm. It localises to the cell projection. The protein localises to the dendrite. The protein resides in the synapse. It is found in the synaptosome. In terms of biological role, acts as a translational repressor of SRE-containing messengers. This chain is Protein Smaug homolog 1 (Samd4a), found in Mus musculus (Mouse).